Reading from the N-terminus, the 1102-residue chain is Endocytosis protein end4 (1102 aa).

Residues 9 to 139 (DHMQSDASLM…SFHAQHPEFN (131 aa)) form the ENTH domain. A disordered region spans residues 265-334 (PHDPPDLEGD…SEPEPIQDFW (70 aa)). Polar residues predominate over residues 292–305 (TGASTIAPQPTGTS). Residues 338–661 (TLDQQLAAQQ…ESLLQLSKLQ (324 aa)) adopt a coiled-coil conformation. An I/LWEQ domain is found at 858-1100 (LLNAPGENIE…DMRKTSYHVA (243 aa)).

This sequence belongs to the SLA2 family.

It is found in the cytoplasm. Its subcellular location is the cytoskeleton. Functionally, required for cellular morphogenesis and polarization of the cortical cytoskeleton. Required for establishment of new polarized growth zones where it acts in actin organization. Involved plasma membrane internalization and is essential for fluid-phase endocytosis. The sequence is that of Endocytosis protein end4 (end4) from Schizosaccharomyces pombe (strain 972 / ATCC 24843) (Fission yeast).